Consider the following 394-residue polypeptide: Elongation factor Tu 1 (394 aa).

The tr-type G domain occupies 10–204; the sequence is KPHVNVGTIG…ALDSYIPEPE (195 aa). The interval 19–26 is G1; that stretch reads GHVDHGKT. Position 19-26 (19-26) interacts with GTP; that stretch reads GHVDHGKT. Thr-26 contacts Mg(2+). The G2 stretch occupies residues 60–64; the sequence is GITIN. The G3 stretch occupies residues 81-84; that stretch reads DCPG. GTP contacts are provided by residues 81-85 and 136-139; these read DCPGH and NKCD. A G4 region spans residues 136–139; it reads NKCD. The G5 stretch occupies residues 174-176; that stretch reads SAL.

The protein belongs to the TRAFAC class translation factor GTPase superfamily. Classic translation factor GTPase family. EF-Tu/EF-1A subfamily. Monomer.

The protein resides in the cytoplasm. It carries out the reaction GTP + H2O = GDP + phosphate + H(+). In terms of biological role, GTP hydrolase that promotes the GTP-dependent binding of aminoacyl-tRNA to the A-site of ribosomes during protein biosynthesis. The chain is Elongation factor Tu 1 from Shewanella oneidensis (strain ATCC 700550 / JCM 31522 / CIP 106686 / LMG 19005 / NCIMB 14063 / MR-1).